An 80-amino-acid chain; its full sequence is Exodeoxyribonuclease 7 small subunit (80 aa).

This sequence belongs to the XseB family. In terms of assembly, heterooligomer composed of large and small subunits.

It is found in the cytoplasm. The enzyme catalyses Exonucleolytic cleavage in either 5'- to 3'- or 3'- to 5'-direction to yield nucleoside 5'-phosphates.. Its function is as follows. Bidirectionally degrades single-stranded DNA into large acid-insoluble oligonucleotides, which are then degraded further into small acid-soluble oligonucleotides. This Pseudomonas putida (strain GB-1) protein is Exodeoxyribonuclease 7 small subunit.